The sequence spans 387 residues: DNA double-strand break repair protein Mre11 (387 aa).

Residues aspartate 11, histidine 13, aspartate 52, and aspartate 87 each contribute to the Mn(2+) site. Histidine 88 acts as the Proton donor in catalysis. 3 residues coordinate Mn(2+): histidine 159, histidine 190, and histidine 192.

The protein belongs to the MRE11/RAD32 family. As to quaternary structure, homodimer. Forms a heterotetramer composed of two Mre11 subunits and two Rad50 subunits. Interacts with HerA. The cofactor is Mn(2+).

With respect to regulation, nuclease activity is regulated by Rad50. Functionally, part of the Rad50/Mre11 complex, which is involved in the early steps of DNA double-strand break (DSB) repair. The complex may facilitate opening of the processed DNA ends to aid in the recruitment of HerA and NurA. Mre11 binds to DSB ends and has both double-stranded 3'-5' exonuclease activity and single-stranded endonuclease activity. The polypeptide is DNA double-strand break repair protein Mre11 (Sulfurisphaera tokodaii (strain DSM 16993 / JCM 10545 / NBRC 100140 / 7) (Sulfolobus tokodaii)).